We begin with the raw amino-acid sequence, 231 residues long: MKQYNDLFKIIHREGYIFIASFALVSFLLASFNEKLGCMGFIATAWCIYFFRNPDRFVPIGNDLVISPADGVIQEIKEALPPAELGLGDVEMIRVSIFLNIFNVHVNRIPANGKILALHYNPGKFFNASLDKASVYNERQSVLMETEQGQKIAFVQIAGLIARRIVCDLEESNEVKAGERYGIIRFGSRVDVYLPLKTALLVSKGQTAIGGETIIADFGRKKTAELQFERK.

S188 acts as the Schiff-base intermediate with substrate; via pyruvic acid in catalysis. S188 carries the pyruvic acid (Ser); by autocatalysis modification.

This sequence belongs to the phosphatidylserine decarboxylase family. PSD-A subfamily. In terms of assembly, heterodimer of a large membrane-associated beta subunit and a small pyruvoyl-containing alpha subunit. Pyruvate serves as cofactor. Post-translationally, is synthesized initially as an inactive proenzyme. Formation of the active enzyme involves a self-maturation process in which the active site pyruvoyl group is generated from an internal serine residue via an autocatalytic post-translational modification. Two non-identical subunits are generated from the proenzyme in this reaction, and the pyruvate is formed at the N-terminus of the alpha chain, which is derived from the carboxyl end of the proenzyme. The post-translation cleavage follows an unusual pathway, termed non-hydrolytic serinolysis, in which the side chain hydroxyl group of the serine supplies its oxygen atom to form the C-terminus of the beta chain, while the remainder of the serine residue undergoes an oxidative deamination to produce ammonia and the pyruvoyl prosthetic group on the alpha chain.

Its subcellular location is the cell membrane. It carries out the reaction a 1,2-diacyl-sn-glycero-3-phospho-L-serine + H(+) = a 1,2-diacyl-sn-glycero-3-phosphoethanolamine + CO2. The protein operates within phospholipid metabolism; phosphatidylethanolamine biosynthesis; phosphatidylethanolamine from CDP-diacylglycerol: step 2/2. Catalyzes the formation of phosphatidylethanolamine (PtdEtn) from phosphatidylserine (PtdSer). The protein is Phosphatidylserine decarboxylase proenzyme of Rickettsia bellii (strain OSU 85-389).